A 276-amino-acid polypeptide reads, in one-letter code: Diaminopimelate epimerase (276 aa).

3 residues coordinate substrate: asparagine 13, glutamine 46, and asparagine 66. Cysteine 75 functions as the Proton donor in the catalytic mechanism. Substrate-binding positions include 76–77 (GN), asparagine 159, asparagine 192, and 210–211 (ER). Cysteine 219 serves as the catalytic Proton acceptor. 220 to 221 (GT) provides a ligand contact to substrate.

It belongs to the diaminopimelate epimerase family. In terms of assembly, homodimer.

It localises to the cytoplasm. The enzyme catalyses (2S,6S)-2,6-diaminopimelate = meso-2,6-diaminopimelate. It functions in the pathway amino-acid biosynthesis; L-lysine biosynthesis via DAP pathway; DL-2,6-diaminopimelate from LL-2,6-diaminopimelate: step 1/1. In terms of biological role, catalyzes the stereoinversion of LL-2,6-diaminopimelate (L,L-DAP) to meso-diaminopimelate (meso-DAP), a precursor of L-lysine and an essential component of the bacterial peptidoglycan. The sequence is that of Diaminopimelate epimerase from Stutzerimonas stutzeri (strain A1501) (Pseudomonas stutzeri).